Reading from the N-terminus, the 168-residue chain is Glycine-rich RNA-binding protein 2 (168 aa).

The RRM domain maps to 8–86; sequence YRCFVGGLAW…RNITVNQAQS (79 aa). A disordered region spans residues 148 to 168; that stretch reads GYGGGGGYGGNRGDSGGNWRN.

Possibly has a role in RNA transcription or processing during stress. The polypeptide is Glycine-rich RNA-binding protein 2 (GRP2) (Sorghum bicolor (Sorghum)).